Consider the following 315-residue polypeptide: Ester hydrolase C11orf54 (315 aa).

Positions 266, 268, and 278 each coordinate Zn(2+).

Monomer. Requires Zn(2+) as cofactor.

It is found in the nucleus. It localises to the cytoplasm. Its function is as follows. Exhibits ester hydrolase activity on the substrate p-nitrophenyl acetate, in vitro. Regulates DNA damage and repair by regulating HIF1A degradation via chaperone-mediated autophagy (CMA). Probably non-functional. In Homo sapiens (Human), this protein is Ester hydrolase C11orf54 (C11orf54).